Here is a 366-residue protein sequence, read N- to C-terminus: tRNA-specific 2-thiouridylase MnmA (366 aa).

ATP-binding positions include 10 to 17 (GLSGGVDS) and isoleucine 36. Cysteine 98 functions as the Nucleophile in the catalytic mechanism. A disulfide bond links cysteine 98 and cysteine 194. An ATP-binding site is contributed by glycine 122. Residues 144–146 (KDQ) form an interaction with tRNA region. Cysteine 194 acts as the Cysteine persulfide intermediate in catalysis. Residues 303–304 (RY) form an interaction with tRNA region.

Belongs to the MnmA/TRMU family.

The protein localises to the cytoplasm. It catalyses the reaction S-sulfanyl-L-cysteinyl-[protein] + uridine(34) in tRNA + AH2 + ATP = 2-thiouridine(34) in tRNA + L-cysteinyl-[protein] + A + AMP + diphosphate + H(+). Catalyzes the 2-thiolation of uridine at the wobble position (U34) of tRNA, leading to the formation of s(2)U34. This chain is tRNA-specific 2-thiouridylase MnmA, found in Chlorobaculum tepidum (strain ATCC 49652 / DSM 12025 / NBRC 103806 / TLS) (Chlorobium tepidum).